The following is a 203-amino-acid chain: Recombination protein RecR (203 aa).

The C4-type zinc finger occupies C56–C71. The 101-residue stretch at S79–P179 folds into the Toprim domain.

This sequence belongs to the RecR family.

Functionally, may play a role in DNA repair. It seems to be involved in an RecBC-independent recombinational process of DNA repair. It may act with RecF and RecO. This is Recombination protein RecR from Mycolicibacterium vanbaalenii (strain DSM 7251 / JCM 13017 / BCRC 16820 / KCTC 9966 / NRRL B-24157 / PYR-1) (Mycobacterium vanbaalenii).